A 118-amino-acid polypeptide reads, in one-letter code: Peptidyl-tRNA hydrolase (118 aa).

This sequence belongs to the PTH2 family.

The protein resides in the cytoplasm. It catalyses the reaction an N-acyl-L-alpha-aminoacyl-tRNA + H2O = an N-acyl-L-amino acid + a tRNA + H(+). Functionally, the natural substrate for this enzyme may be peptidyl-tRNAs which drop off the ribosome during protein synthesis. In Thermococcus sibiricus (strain DSM 12597 / MM 739), this protein is Peptidyl-tRNA hydrolase.